The chain runs to 237 residues: Myb-related protein MYBAS1 (237 aa).

2 consecutive HTH myb-type domains span residues 5 to 57 (REEM…VNYL) and 58 to 112 (HPGL…RKKA). Residues 33 to 57 (WDFVAKVSGLNRTGKSCRLRWVNYL) constitute a DNA-binding region (H-T-H motif). The short motif at 62–65 (KHGR) is the Bipartite nuclear localization signal 1 element. Residues 85 to 108 (WSRIARRLPGRTDNEIKNYWRTHM) constitute a DNA-binding region (H-T-H motif). The Bipartite nuclear localization signal 2 motif lies at 109–117 (RKKAQERRG).

It localises to the nucleus. Functionally, transcription factor. This chain is Myb-related protein MYBAS1 (MYBAS1), found in Oryza sativa subsp. japonica (Rice).